Here is a 324-residue protein sequence, read N- to C-terminus: Glyoxylate/hydroxypyruvate reductase B (324 aa).

Active-site residues include Arg-237 and Glu-266. The Proton donor role is filled by His-285.

Belongs to the D-isomer specific 2-hydroxyacid dehydrogenase family. GhrB subfamily. Homodimer.

The protein localises to the cytoplasm. It catalyses the reaction glycolate + NADP(+) = glyoxylate + NADPH + H(+). It carries out the reaction (R)-glycerate + NAD(+) = 3-hydroxypyruvate + NADH + H(+). The catalysed reaction is (R)-glycerate + NADP(+) = 3-hydroxypyruvate + NADPH + H(+). In terms of biological role, catalyzes the NADPH-dependent reduction of glyoxylate and hydroxypyruvate into glycolate and glycerate, respectively. This chain is Glyoxylate/hydroxypyruvate reductase B, found in Shigella boydii serotype 18 (strain CDC 3083-94 / BS512).